A 567-amino-acid chain; its full sequence is Urease subunit alpha (567 aa).

Residues 128 to 567 form the Urease domain; that stretch reads GGIDAHVHFI…LPMSQRYFLF (440 aa). Positions 133, 135, and 216 each coordinate Ni(2+). Position 216 is an N6-carboxylysine (Lys-216). Substrate is bound at residue His-218. Residues His-245 and His-271 each coordinate Ni(2+). The Proton donor role is filled by His-319. Ni(2+) is bound at residue Asp-359.

Belongs to the metallo-dependent hydrolases superfamily. Urease alpha subunit family. In terms of assembly, heterotrimer of UreA (gamma), UreB (beta) and UreC (alpha) subunits. Three heterotrimers associate to form the active enzyme. Ni cation serves as cofactor. In terms of processing, carboxylation allows a single lysine to coordinate two nickel ions.

The protein resides in the cytoplasm. It carries out the reaction urea + 2 H2O + H(+) = hydrogencarbonate + 2 NH4(+). It functions in the pathway nitrogen metabolism; urea degradation; CO(2) and NH(3) from urea (urease route): step 1/1. This is Urease subunit alpha from Blochmanniella pennsylvanica (strain BPEN).